The sequence spans 36 residues: Photosystem I reaction center subunit VIII (36 aa).

Residues 9 to 29 (ILTPVVTLVFPGLMFALFFVL) traverse the membrane as a helical segment.

It belongs to the PsaI family.

The protein resides in the plastid. Its subcellular location is the chloroplast thylakoid membrane. Its function is as follows. May help in the organization of the PsaL subunit. This Emiliania huxleyi (Coccolithophore) protein is Photosystem I reaction center subunit VIII.